The chain runs to 232 residues: Ubiquinone biosynthesis O-methyltransferase (232 aa).

S-adenosyl-L-methionine-binding residues include arginine 36, glycine 55, aspartate 76, and methionine 120.

Belongs to the methyltransferase superfamily. UbiG/COQ3 family.

The enzyme catalyses a 3-demethylubiquinol + S-adenosyl-L-methionine = a ubiquinol + S-adenosyl-L-homocysteine + H(+). The catalysed reaction is a 3-(all-trans-polyprenyl)benzene-1,2-diol + S-adenosyl-L-methionine = a 2-methoxy-6-(all-trans-polyprenyl)phenol + S-adenosyl-L-homocysteine + H(+). Its pathway is cofactor biosynthesis; ubiquinone biosynthesis. O-methyltransferase that catalyzes the 2 O-methylation steps in the ubiquinone biosynthetic pathway. In Paraburkholderia phytofirmans (strain DSM 17436 / LMG 22146 / PsJN) (Burkholderia phytofirmans), this protein is Ubiquinone biosynthesis O-methyltransferase.